The following is an 820-amino-acid chain: Trimethylamine-N-oxide reductase (820 aa).

Residues 1–33 (MAITRRSFLKGVATTSAASIIGPSLLTSVSAQA) constitute a signal peptide (tat-type signal). Residue Ser179 coordinates Mo-bis(molybdopterin guanine dinucleotide).

This sequence belongs to the prokaryotic molybdopterin-containing oxidoreductase family. Mo-bis(molybdopterin guanine dinucleotide) serves as cofactor. Predicted to be exported by the Tat system. The position of the signal peptide cleavage has not been experimentally proven.

It is found in the periplasm. It catalyses the reaction trimethylamine + 2 Fe(III)-[cytochrome c] + H2O = trimethylamine N-oxide + 2 Fe(II)-[cytochrome c] + 3 H(+). In terms of biological role, reduces trimethylamine-N-oxide (TMAO) into trimethylamine; an anaerobic reaction coupled to energy-yielding reactions. In Vibrio cholerae serotype O1 (strain ATCC 39315 / El Tor Inaba N16961), this protein is Trimethylamine-N-oxide reductase (torA).